The chain runs to 400 residues: Putative cytochrome P450 141 (400 aa).

The next 2 helical transmembrane spans lie at 225–245 (VVGM…AVIT) and 294–314 (VVIA…ITSA). Cysteine 346 is a heme binding site.

This sequence belongs to the cytochrome P450 family. Heme serves as cofactor.

It localises to the cell membrane. This is Putative cytochrome P450 141 (cyp141) from Mycobacterium tuberculosis (strain CDC 1551 / Oshkosh).